The following is a 333-amino-acid chain: Probable HTH-type transcriptional repressor ExuR (333 aa).

An HTH lacI-type domain is found at 2–56 (VTIKDIAKLANVSHTTVSRALNNSPYIKEHTKKKILELAEQLNYTPNVNAKSLAM). Residues 4 to 23 (IKDIAKLANVSHTTVSRALN) constitute a DNA-binding region (H-T-H motif).

Functionally, transcriptional repressor for the exu locus which is required for galacturonate utilization. This chain is Probable HTH-type transcriptional repressor ExuR (exuR), found in Bacillus subtilis (strain 168).